Consider the following 384-residue polypeptide: Lipid-A-disaccharide synthase (384 aa).

The protein belongs to the LpxB family.

The catalysed reaction is a lipid X + a UDP-2-N,3-O-bis[(3R)-3-hydroxyacyl]-alpha-D-glucosamine = a lipid A disaccharide + UDP + H(+). Its pathway is bacterial outer membrane biogenesis; LPS lipid A biosynthesis. Its function is as follows. Condensation of UDP-2,3-diacylglucosamine and 2,3-diacylglucosamine-1-phosphate to form lipid A disaccharide, a precursor of lipid A, a phosphorylated glycolipid that anchors the lipopolysaccharide to the outer membrane of the cell. This chain is Lipid-A-disaccharide synthase (lpxB), found in Neisseria meningitidis serogroup A / serotype 4A (strain DSM 15465 / Z2491).